A 505-amino-acid polypeptide reads, in one-letter code: Maturase K (505 aa).

The protein belongs to the intron maturase 2 family. MatK subfamily.

It is found in the plastid. Its subcellular location is the chloroplast. Usually encoded in the trnK tRNA gene intron. Probably assists in splicing its own and other chloroplast group II introns. This chain is Maturase K, found in Chiococca alba (West Indian milkberry).